Consider the following 239-residue polypeptide: Biosynthetic peptidoglycan transglycosylase (239 aa).

A helical transmembrane segment spans residues 29 to 49 (GMFGLGALMLVWIVAYAVVPV).

It belongs to the glycosyltransferase 51 family.

Its subcellular location is the cell inner membrane. It carries out the reaction [GlcNAc-(1-&gt;4)-Mur2Ac(oyl-L-Ala-gamma-D-Glu-L-Lys-D-Ala-D-Ala)](n)-di-trans,octa-cis-undecaprenyl diphosphate + beta-D-GlcNAc-(1-&gt;4)-Mur2Ac(oyl-L-Ala-gamma-D-Glu-L-Lys-D-Ala-D-Ala)-di-trans,octa-cis-undecaprenyl diphosphate = [GlcNAc-(1-&gt;4)-Mur2Ac(oyl-L-Ala-gamma-D-Glu-L-Lys-D-Ala-D-Ala)](n+1)-di-trans,octa-cis-undecaprenyl diphosphate + di-trans,octa-cis-undecaprenyl diphosphate + H(+). Its pathway is cell wall biogenesis; peptidoglycan biosynthesis. In terms of biological role, peptidoglycan polymerase that catalyzes glycan chain elongation from lipid-linked precursors. The protein is Biosynthetic peptidoglycan transglycosylase of Jannaschia sp. (strain CCS1).